The sequence spans 299 residues: Acetylglutamate kinase (299 aa).

Substrate-binding positions include 70 to 71, R92, and N186; that span reads GG.

Belongs to the acetylglutamate kinase family. ArgB subfamily.

The protein resides in the cytoplasm. The enzyme catalyses N-acetyl-L-glutamate + ATP = N-acetyl-L-glutamyl 5-phosphate + ADP. It participates in amino-acid biosynthesis; L-arginine biosynthesis; N(2)-acetyl-L-ornithine from L-glutamate: step 2/4. Its function is as follows. Catalyzes the ATP-dependent phosphorylation of N-acetyl-L-glutamate. This is Acetylglutamate kinase from Petrotoga mobilis (strain DSM 10674 / SJ95).